A 398-amino-acid polypeptide reads, in one-letter code: T-box transcription factor TBX1 (398 aa).

The interval 23 to 72 (AAGGFPGAASPGADPYGPREPPPPPPRYDPCAAAAPGAPGPPPPPHAYPF) is disordered. Residues 29–38 (GAASPGADPY) are compositionally biased toward low complexity. 2 stretches are compositionally biased toward pro residues: residues 40–50 (PREPPPPPPRY) and 60–69 (APGPPPPPHA). Residues 119–297 (LWDEFNQLGT…SNPFAKGFRD (179 aa)) constitute a DNA-binding region (T-box).

In terms of assembly, binds DNA as a dimer. Interacts with DSCR6. Interacts with NKX2-5.

It localises to the nucleus. Its function is as follows. Transcription factor that plays a key role in cardiovascular development by promoting pharyngeal arch segmentation during embryonic development. Also involved in craniofacial muscle development. Together with NKX2-5, acts as a regulator of asymmetric cardiac morphogenesis by promoting expression of PITX2. Acts upstream of TBX1 for the formation of the thymus and parathyroid glands from the third pharyngeal pouch. Required for hair follicle stem cell self-renewal. Binds to the palindromic T site 5'-TTCACACCTAGGTGTGAA-3' DNA sequence. This Homo sapiens (Human) protein is T-box transcription factor TBX1.